Here is a 1045-residue protein sequence, read N- to C-terminus: MGEIEQRPTPGSRLGAPENSGISTLERGQKPPPTPSGKLVSIKIQMLDDTQEAFEVPQRAPGKVLLDAVCNHLNLVEGDYFGLEFPDHKKITVWLDLLKPIVKQIRRPKHVVVKFVVKFFPPDHTQLQEELTRYLFALQVKQDLAQGRLTCNDTSAALLISHIVQSEIGDFDEALDREHLAKNKYIPQQDALEDKIVEFHHNHIGQTPAESDFQLLEIARRLEMYGIRLHPAKDREGTKINLAVANTGILVFQGFTKINAFNWAKVRKLSFKRKRFLIKLRPDANSAYQDTLEFLMASRDFCKSFWKICVEHHAFFRLFEEPKPKPKPVLFSRGSSFRFSGRTQKQVLDYVKEGGHKKVQFERKHSKIHSIRSLASQPTELNSEVLEQSQQSTSLTFGEGAESPGGQSCRRGKEPKVSAGEPGSHPSPAPRRSPAGNKQADGAASAPTEEEEEVVKDRTQQSKPQPPQPSTGSLTGSPHLSELSVNSQGGVAPANVTLSPNLSPDTKQASPLISPLLNDQACPRTDDEDEGRRKRFPTDKAYFIAKEVSTTERTYLKDLEVITSWFQSTVSKEDAMPEALKSLIFPNFEPLHKFHTNFLKEIEQRLALWEGRSNAQIRDYQRIGDVMLKNIQGMKHLAAHLWKHSEALEALENGIKSSRRLENFCRDFELQKVCYLPLNTFLLRPLHRLMHYKQVLERLCKHHPPSHADFRDCRAALAEITEMVAQLHGTMIKMENFQKLHELKKDLIGIDNLVVPGREFIRLGSLSKLSGKGLQQRMFFLFNDVLLYTSRGLTASNQFKVHGQLPLYGMTIEESEDEWGVPHCLTLRGQRQSIIVAASSRSEMEKWVEDIQMAIDLAEKSSSPAPEFLASSPPDNKSPDEATAADQESEDDLSASRTSLERQAPHRGNTMVHVCWHRNTSVSMVDFSIAVENQLSGNLLRKFKNSNGWQKLWVVFTNFCLFFYKSHQDNHPLASLPLLGYSLTIPSESENIQKDYVFKLHFKSHVYYFRAESEYTFERWMEVIRSATSSASRPHVLSHKESLVY.

A disordered region spans residues 1–37 (MGEIEQRPTPGSRLGAPENSGISTLERGQKPPPTPSG). Phosphoserine occurs at positions 20 and 23. T24 carries the post-translational modification Phosphothreonine. Positions 40 to 320 (VSIKIQMLDD…EHHAFFRLFE (281 aa)) constitute an FERM domain. 7 positions are modified to phosphoserine: S340, S373, S389, S403, S418, S427, and S433. A disordered region spans residues 361 to 534 (FERKHSKIHS…TDDEDEGRRK (174 aa)). Residues 373–396 (SLASQPTELNSEVLEQSQQSTSLT) show a composition bias toward polar residues. 2 stretches are compositionally biased toward polar residues: residues 471 to 489 (TGSL…NSQG) and 496 to 511 (VTLS…QASP). S510 and S514 each carry phosphoserine. Residues 540–730 (KAYFIAKEVS…TEMVAQLHGT (191 aa)) form the DH domain. Positions 759–856 (EFIRLGSLSK…WVEDIQMAID (98 aa)) constitute a PH 1 domain. Phosphoserine occurs at positions 833, 872, and 878. The disordered stretch occupies residues 864 to 903 (PAPEFLASSPPDNKSPDEATAADQESEDDLSASRTSLERQ). Position 883 is a phosphothreonine (T883). Residues S889, S896, and S899 each carry the phosphoserine modification. Positions 932-1029 (ENQLSGNLLR…WMEVIRSATS (98 aa)) constitute a PH 2 domain.

In terms of assembly, interacts with CADM1. Interacts with RAC1. As to expression, detected in cAMP-treated chondrocytes, but not in untreated chondrocytes. Detected in fetal brain, heart and spleen, and in adult testis, kidney and lung.

It localises to the cell membrane. Its subcellular location is the synapse. The protein localises to the synaptosome. It is found in the cytoplasm. The protein resides in the cytosol. It localises to the cell projection. Its subcellular location is the filopodium. The protein localises to the dendrite. It is found in the dendritic spine. In terms of biological role, functions as a guanine nucleotide exchange factor for RAC1. May play a role in semaphorin signaling. Plays a role in the assembly and disassembly of dendritic filopodia, the formation of dendritic spines, regulation of dendrite length and ultimately the formation of synapses. This chain is FERM, ARHGEF and pleckstrin domain-containing protein 1 (FARP1), found in Homo sapiens (Human).